The chain runs to 184 residues: ATP-dependent protease subunit HslV (184 aa).

The active site involves Thr-12. Residues Ala-167, Cys-170, and Thr-173 each coordinate Na(+).

It belongs to the peptidase T1B family. HslV subfamily. As to quaternary structure, a double ring-shaped homohexamer of HslV is capped on each side by a ring-shaped HslU homohexamer. The assembly of the HslU/HslV complex is dependent on binding of ATP.

Its subcellular location is the cytoplasm. The catalysed reaction is ATP-dependent cleavage of peptide bonds with broad specificity.. Allosterically activated by HslU binding. Functionally, protease subunit of a proteasome-like degradation complex believed to be a general protein degrading machinery. The sequence is that of ATP-dependent protease subunit HslV from Wolbachia pipientis subsp. Culex pipiens (strain wPip).